Consider the following 311-residue polypeptide: MAPFSFILTVLLYALTCSARALGHAHALLPRAGSLEQVTDFGDNPTNVGMYIYVPNNLASSPGIVVAIHYSPEGTGTAEAYYTGSPYAQLAEQYGFIVIYPQSPYEGTCWDVSSQETLTHNGGGNSNSIANMVTWAISKYNADSSKVFVTGSSSGAMMTHQNVMAATYPELFAAATVYSGVPAGCFYSSSNQQDGWNSTCAQGQVITTPENWANVAKGMYPGYNGTRPKMQIYHGSVDTTLLPQNYYETCKQWAGVFGYNYDSPQQVQDNTPQSNYATTTWGDDLQGIFATGVGHTVPIRGDDDMAWFGFA.

The first 19 residues, 1-19 (MAPFSFILTVLLYALTCSA), serve as a signal peptide directing secretion. Ser153 serves as the catalytic Charge relay system. 2 N-linked (GlcNAc...) asparagine glycosylation sites follow: Asn197 and Asn224.

Belongs to the carbohydrate esterase 1 (CE1) family. AxeA subfamily. As to quaternary structure, monomer.

It localises to the secreted. The enzyme catalyses Deacetylation of xylans and xylo-oligosaccharides.. The protein operates within glycan degradation; xylan degradation. Acetylxylan esterase involved in the hydrolysis of xylan, a major structural heterogeneous polysaccharide found in plant biomass representing the second most abundant polysaccharide in the biosphere, after cellulose. Degrades acetylated xylans by cleaving acetyl side groups from the hetero-xylan backbone. This Aspergillus terreus (strain NIH 2624 / FGSC A1156) protein is Probable acetylxylan esterase A (axeA).